Reading from the N-terminus, the 710-residue chain is Interferon-induced GTP-binding protein Mx2 (710 aa).

Residues 1–51 (MSMSFRPLKYKRHTQTSTQHHPKQDIYFHQQPPGPPLGQTMSPPQWQVEES) form a disordered region. The segment covering 39-50 (QTMSPPQWQVEE) has biased composition (polar residues). Residues 112–383 (DLALPAIAVI…LIWHINKSLP (272 aa)) form the Dynamin-type G domain. Positions 122–129 (GDQSSGKS) are G1 motif. 122-129 (GDQSSGKS) is a GTP binding site. Positions 147-149 (ITR) are G2 motif. The interval 221–224 (DLPG) is G3 motif. Residues 221–225 (DLPGI) and 290–293 (TKPD) each bind GTP. The interval 290 to 293 (TKPD) is G4 motif. The interval 322-325 (KCRG) is G5 motif. Residues 619 to 710 (IVEIGVHLNA…ALYEFPHFKG (92 aa)) form the GED domain.

Belongs to the TRAFAC class dynamin-like GTPase superfamily. Dynamin/Fzo/YdjA family.

It is found in the cytoplasm. Its subcellular location is the nucleus. Interferon-induced dynamin-like GTPase with antiviral activity against vesicular stomatitis virus (VSV). The chain is Interferon-induced GTP-binding protein Mx2 (MX2) from Bos taurus (Bovine).